A 757-amino-acid chain; its full sequence is Double zinc ribbon and ankyrin repeat-containing protein 1 (757 aa).

DZANK-type zinc fingers lie at residues 230 to 290 (CAHC…VVCE) and 359 to 407 (CSRC…GSCG). ANK repeat units lie at residues 631–662 (ENRL…DPNC) and 666–695 (QGRP…DIDQ).

Interacts with NINL. Associates with DYNC1H1 and multiple dynein intermediate and light chains as well as actin-binding proteins. Expressed in retina.

It localises to the cell projection. It is found in the cilium. Involved in vesicle transport in photoreceptor cells. The polypeptide is Double zinc ribbon and ankyrin repeat-containing protein 1 (Rattus norvegicus (Rat)).